Consider the following 164-residue polypeptide: uncharacterized protein (164 aa).

It localises to the mitochondrion. This is an uncharacterized protein from Arabidopsis thaliana (Mouse-ear cress).